Reading from the N-terminus, the 113-residue chain is 2Fe-2S ferredoxin (113 aa).

The 103-residue stretch at 2-104 folds into the 2Fe-2S ferredoxin-type domain; it reads PKVIFLPNED…DLVVEIPKYN (103 aa). Residues C42, C48, C51, and C87 each coordinate [2Fe-2S] cluster.

This sequence belongs to the adrenodoxin/putidaredoxin family. [2Fe-2S] cluster serves as cofactor.

Functionally, ferredoxin are iron-sulfur proteins that transfer electrons in a wide variety of metabolic reactions. The protein is 2Fe-2S ferredoxin (fdx) of Haemophilus influenzae (strain ATCC 51907 / DSM 11121 / KW20 / Rd).